Consider the following 860-residue polypeptide: Leucine--tRNA ligase (860 aa).

The 'HIGH' region signature appears at 42–52 (PYPSGRLHMGH). The short motif at 619–623 (KMSKS) is the 'KMSKS' region element. Lys622 is a binding site for ATP.

This sequence belongs to the class-I aminoacyl-tRNA synthetase family.

It localises to the cytoplasm. It carries out the reaction tRNA(Leu) + L-leucine + ATP = L-leucyl-tRNA(Leu) + AMP + diphosphate. This is Leucine--tRNA ligase from Escherichia coli (strain SE11).